The following is a 164-amino-acid chain: MSGKREFKSFGSTEETMFSQHHKIPSTSEMYAEPENFLEIEVRNPKTHVPNGVDQRGMYTDYEIICRTNLPNFHKRASRVRRRYSDFEFFRKCLLKEISMLNNPRVVVPHLPGKIYLSNRFSDEVIEERRQGLNRWMQIVAGHPLLQSGSKTLIRFIEDDKFVG.

A disordered region spans residues 1–26 (MSGKREFKSFGSTEETMFSQHHKIPS). A compositionally biased stretch (polar residues) spans 10–26 (FGSTEETMFSQHHKIPS). The PX domain maps to 40–163 (IEVRNPKTHV…IRFIEDDKFV (124 aa)). Residues R83, S85, K114, R120, and R129 each contribute to the a 1,2-diacyl-sn-glycero-3-phospho-(1D-myo-inositol-3-phosphate) site.

This sequence belongs to the sorting nexin family.

It localises to the cytoplasm. Its subcellular location is the golgi apparatus membrane. The protein localises to the prevacuolar compartment membrane. Functionally, required for retention of late Golgi membrane proteins. Component of the retrieval machinery that functions by direct interaction with the cytosolic tails of certain TGN membrane proteins during the sorting/budding process at the prevacuolar compartment. Binds phosphatidylinositol 3-phosphate (PtdIns(P3)). The polypeptide is Sorting nexin-3 (SNX3) (Candida glabrata (strain ATCC 2001 / BCRC 20586 / JCM 3761 / NBRC 0622 / NRRL Y-65 / CBS 138) (Yeast)).